The chain runs to 392 residues: Chaperone protein DnaJ (392 aa).

The J domain occupies 2–67 (DYYTILGVAK…QKRESYDRYG (66 aa)). Residues 149–227 (GVEKELLVSG…CRGQGRIKDK (79 aa)) form a CR-type zinc finger. Zn(2+) is bound by residues cysteine 162, cysteine 165, cysteine 179, cysteine 182, cysteine 201, cysteine 204, cysteine 215, and cysteine 218. 4 CXXCXGXG motif repeats span residues 162–169 (CDACSGSG), 179–186 (CDRCKGSG), 201–208 (CPDCSGEG), and 215–222 (CSECRGQG).

This sequence belongs to the DnaJ family. In terms of assembly, homodimer. It depends on Zn(2+) as a cofactor.

Its subcellular location is the cytoplasm. In terms of biological role, participates actively in the response to hyperosmotic and heat shock by preventing the aggregation of stress-denatured proteins and by disaggregating proteins, also in an autonomous, DnaK-independent fashion. Unfolded proteins bind initially to DnaJ; upon interaction with the DnaJ-bound protein, DnaK hydrolyzes its bound ATP, resulting in the formation of a stable complex. GrpE releases ADP from DnaK; ATP binding to DnaK triggers the release of the substrate protein, thus completing the reaction cycle. Several rounds of ATP-dependent interactions between DnaJ, DnaK and GrpE are required for fully efficient folding. Also involved, together with DnaK and GrpE, in the DNA replication of plasmids through activation of initiation proteins. The protein is Chaperone protein DnaJ of Chlamydia muridarum (strain MoPn / Nigg).